The following is a 467-amino-acid chain: Bifunctional enzyme LpxC/FabZ (467 aa).

Residues 1–306 are UDP-3-O-acyl-N-acetylglucosamine deacetylase; it reads MLIHQRTLQN…FVKQLKKYAD (306 aa). Zn(2+) is bound by residues His-79, His-264, and Asp-268. His-291 serves as the catalytic Proton donor. Positions 307 to 467 are 3-hydroxyacyl-[acyl-carrier-protein] dehydratase; the sequence is RNKLARQYQH…LMATVMEKKN (161 aa). His-370 is an active-site residue.

In the N-terminal section; belongs to the LpxC family. This sequence in the C-terminal section; belongs to the thioester dehydratase family. It depends on Zn(2+) as a cofactor.

The protein resides in the cytoplasm. The enzyme catalyses a UDP-3-O-[(3R)-3-hydroxyacyl]-N-acetyl-alpha-D-glucosamine + H2O = a UDP-3-O-[(3R)-3-hydroxyacyl]-alpha-D-glucosamine + acetate. The catalysed reaction is a (3R)-hydroxyacyl-[ACP] = a (2E)-enoyl-[ACP] + H2O. It participates in glycolipid biosynthesis; lipid IV(A) biosynthesis; lipid IV(A) from (3R)-3-hydroxytetradecanoyl-[acyl-carrier-protein] and UDP-N-acetyl-alpha-D-glucosamine: step 2/6. Its function is as follows. Catalyzes the hydrolysis of UDP-3-O-myristoyl-N-acetylglucosamine to form UDP-3-O-myristoylglucosamine and acetate, the committed step in lipid A biosynthesis. In terms of biological role, involved in unsaturated fatty acids biosynthesis. Catalyzes the dehydration of short chain beta-hydroxyacyl-ACPs and long chain saturated and unsaturated beta-hydroxyacyl-ACPs. The sequence is that of Bifunctional enzyme LpxC/FabZ (lpxC/fabZ) from Chlorobaculum tepidum (strain ATCC 49652 / DSM 12025 / NBRC 103806 / TLS) (Chlorobium tepidum).